The following is a 132-amino-acid chain: Aspartate 1-decarboxylase (132 aa).

Ser-25 serves as the catalytic Schiff-base intermediate with substrate; via pyruvic acid. Ser-25 carries the post-translational modification Pyruvic acid (Ser). Thr-57 is a binding site for substrate. The active-site Proton donor is Tyr-58. 73–75 (GAA) is a substrate binding site.

The protein belongs to the PanD family. In terms of assembly, heterooctamer of four alpha and four beta subunits. Requires pyruvate as cofactor. Post-translationally, is synthesized initially as an inactive proenzyme, which is activated by self-cleavage at a specific serine bond to produce a beta-subunit with a hydroxyl group at its C-terminus and an alpha-subunit with a pyruvoyl group at its N-terminus.

It is found in the cytoplasm. It carries out the reaction L-aspartate + H(+) = beta-alanine + CO2. Its pathway is cofactor biosynthesis; (R)-pantothenate biosynthesis; beta-alanine from L-aspartate: step 1/1. Functionally, catalyzes the pyruvoyl-dependent decarboxylation of aspartate to produce beta-alanine. The protein is Aspartate 1-decarboxylase of Heliobacterium modesticaldum (strain ATCC 51547 / Ice1).